The following is a 396-amino-acid chain: Beta-1,3-N-acetylglucosaminyltransferase radical fringe (396 aa).

Topologically, residues 1–6 (MNFSCL) are cytoplasmic. The chain crosses the membrane as a helical; Signal-anchor for type II membrane protein span at residues 7-27 (GLSKICFLVSVIFCTFLLLFI). The Lumenal portion of the chain corresponds to 28–396 (PKTKTPWRPR…THWCPPRKTR (369 aa)). Residues N49 and N120 are each glycosylated (N-linked (GlcNAc...) asparagine). R145 lines the substrate pocket. N184 is a glycosylation site (N-linked (GlcNAc...) asparagine). 2 disulfide bridges follow: C185-C196 and C214-C277. Position 218 (D218) interacts with substrate. D219 is a binding site for Mn(2+). D307 is a catalytic residue. H331 serves as a coordination point for Mn(2+). C381 and C390 form a disulfide bridge.

This sequence belongs to the glycosyltransferase 31 family. It depends on Mn(2+) as a cofactor. As to expression, detected in the mesanchymal region of the developing limb. Expressed in mesoderm but not in ectoderm with no evident boundary of expression.

The protein resides in the golgi apparatus membrane. It carries out the reaction 3-O-(alpha-L-fucosyl)-L-threonyl-[EGF-like domain protein] + UDP-N-acetyl-alpha-D-glucosamine = 3-O-(N-acetyl-beta-D-glucosaminyl-(1-&gt;3)-alpha-L-fucosyl)-L-threonyl-[EGF-like domain protein] + UDP + H(+). The catalysed reaction is 3-O-(alpha-L-fucosyl)-L-seryl-[EGF-like domain protein] + UDP-N-acetyl-alpha-D-glucosamine = 3-O-(N-acetyl-beta-D-glucosaminyl-(1-&gt;3)-alpha-L-fucosyl)-L-seryl-[EGF-like domain protein] + UDP + H(+). Functionally, glycosyltransferase that initiates the elongation of O-linked fucose residues attached to EGF-like repeats in the extracellular domain of Notch molecules. Involved in forelimb development and in adult forelimb regeneration. This chain is Beta-1,3-N-acetylglucosaminyltransferase radical fringe (RFNG), found in Notophthalmus viridescens (Eastern newt).